The primary structure comprises 465 residues: Ribulose bisphosphate carboxylase large chain (465 aa).

An N6,N6,N6-trimethyllysine modification is found at Lys4. Asn113 and Thr163 together coordinate substrate. Lys165 serves as the catalytic Proton acceptor. Lys167 serves as a coordination point for substrate. 3 residues coordinate Mg(2+): Lys191, Asp193, and Glu194. Lys191 is subject to N6-carboxylysine. His284 acts as the Proton acceptor in catalysis. 3 residues coordinate substrate: Arg285, His317, and Ser369.

This sequence belongs to the RuBisCO large chain family. Type I subfamily. In terms of assembly, heterohexadecamer of 8 large chains and 8 small chains; disulfide-linked. The disulfide link is formed within the large subunit homodimers. It depends on Mg(2+) as a cofactor. Post-translationally, the disulfide bond which can form in the large chain dimeric partners within the hexadecamer appears to be associated with oxidative stress and protein turnover.

The protein localises to the plastid. It is found in the chloroplast. It carries out the reaction 2 (2R)-3-phosphoglycerate + 2 H(+) = D-ribulose 1,5-bisphosphate + CO2 + H2O. It catalyses the reaction D-ribulose 1,5-bisphosphate + O2 = 2-phosphoglycolate + (2R)-3-phosphoglycerate + 2 H(+). In terms of biological role, ruBisCO catalyzes two reactions: the carboxylation of D-ribulose 1,5-bisphosphate, the primary event in carbon dioxide fixation, as well as the oxidative fragmentation of the pentose substrate in the photorespiration process. Both reactions occur simultaneously and in competition at the same active site. The chain is Ribulose bisphosphate carboxylase large chain from Hamamelis mollis (Chinese witch hazel).